A 205-amino-acid polypeptide reads, in one-letter code: Recombination protein RecR (205 aa).

A C4-type zinc finger spans residues 64–79 (CSRCYFITQNDLCAIC). The Toprim domain occupies 87-182 (RIVCVVEEPL…RVTRLARGLP (96 aa)).

It belongs to the RecR family.

Its function is as follows. May play a role in DNA repair. It seems to be involved in an RecBC-independent recombinational process of DNA repair. It may act with RecF and RecO. This chain is Recombination protein RecR, found in Roseiflexus castenholzii (strain DSM 13941 / HLO8).